The chain runs to 309 residues: Olfactory receptor 5H17 (309 aa).

Topologically, residues 1–28 (MEKKNETLWTEFVLTGLTCLPQWKPLLF) are extracellular. Asn-5 is a glycosylation site (N-linked (GlcNAc...) asparagine). A helical transmembrane segment spans residues 29 to 49 (LVFLVIYFMTIVGNLGLITLI). Over 50–56 (WNDPHLH) the chain is Cytoplasmic. A helical transmembrane segment spans residues 57–77 (IPMYLFLSNLAFVDTWLSSTV). Residues 78–93 (TPRMLFNLLDKGKVIS) are Extracellular-facing. A helical transmembrane segment spans residues 94–114 (VAECKTQFFSFAISVTTECFL). A disulfide bond links Cys-97 and Cys-189. Topologically, residues 115–144 (LAAMAYDRYAAICNPLLYPVIMTNRLCVRL) are cytoplasmic. The helical transmembrane segment at 145-165 (LALSFIGGFLHAVIHESFLSR) threads the bilayer. Residues 166–198 (LTFCNSNIIYHFYCDVIPLLKISCTDPSLNYLI) are Extracellular-facing. The helical transmembrane segment at 199-219 (IFIFSGSIQVFTIMTVLISYT) threads the bilayer. Residues 220 to 239 (FVLFTILKKKSDKGIRKAFS) lie on the Cytoplasmic side of the membrane. The helical transmembrane segment at 240–260 (TCGAHLLSVSLYYGPLLFMYV) threads the bilayer. Residues 261–271 (HPASSEVDDQD) lie on the Extracellular side of the membrane. Residues 272-292 (MILSLFYTVIIPVLNPIIYSL) form a helical membrane-spanning segment. Residues 293–309 (RNKQVIDSLKKMLKMMV) are Cytoplasmic-facing.

This sequence belongs to the G-protein coupled receptor 1 family.

The protein localises to the cell membrane. In terms of biological role, potential odorant receptor. This is Olfactory receptor 5H17 from Mus musculus (Mouse).